A 592-amino-acid polypeptide reads, in one-letter code: Membrane protein insertase YidC (592 aa).

A helical membrane pass occupies residues 7–27 (NYFVAIALSVLILVAWQYFYV). Residues 38-74 (AEKAQQTQQVQPQQGGQQPAPGQALPGGAVPGESRDQ) form a disordered region. A compositionally biased stretch (low complexity) spans 41–69 (AQQTQQVQPQQGGQQPAPGQALPGGAVPG). 4 helical membrane-spanning segments follow: residues 367 to 387 (LFGN…LIFF), 441 to 461 (WPIL…YITI), 486 to 506 (LFGL…WPII), and 530 to 550 (FTWM…GLVI).

Belongs to the OXA1/ALB3/YidC family. Type 1 subfamily. As to quaternary structure, interacts with the Sec translocase complex via SecD. Specifically interacts with transmembrane segments of nascent integral membrane proteins during membrane integration.

It localises to the cell inner membrane. Functionally, required for the insertion and/or proper folding and/or complex formation of integral membrane proteins into the membrane. Involved in integration of membrane proteins that insert both dependently and independently of the Sec translocase complex, as well as at least some lipoproteins. Aids folding of multispanning membrane proteins. The chain is Membrane protein insertase YidC from Sinorhizobium fredii (strain NBRC 101917 / NGR234).